We begin with the raw amino-acid sequence, 88 residues long: Arminin 1b (88 aa).

The first 18 residues, M1–A18, serve as a signal peptide directing secretion. Positions E19–A57 are excised as a propeptide. A Valine amide modification is found at V85.

This sequence belongs to the arminin family. In terms of tissue distribution, expressed in entodermal epithelium along the body column.

Its subcellular location is the secreted. It localises to the target cell membrane. In terms of biological role, antimicrobial peptide with a broad-spectrum antimicrobial activity. Keeps its antibacterial activity under a wide range of salt concentrations that mimic physiological conditions of human blood, which is surprising, since Hydra is an obligate freshwater animal with nearly no salt tolerance. Does not affect red blood cells. The chain is Arminin 1b from Hydra vulgaris (Hydra).